The sequence spans 568 residues: Proline--tRNA ligase (568 aa).

This sequence belongs to the class-II aminoacyl-tRNA synthetase family. ProS type 1 subfamily. In terms of assembly, homodimer.

It localises to the cytoplasm. It carries out the reaction tRNA(Pro) + L-proline + ATP = L-prolyl-tRNA(Pro) + AMP + diphosphate. In terms of biological role, catalyzes the attachment of proline to tRNA(Pro) in a two-step reaction: proline is first activated by ATP to form Pro-AMP and then transferred to the acceptor end of tRNA(Pro). As ProRS can inadvertently accommodate and process non-cognate amino acids such as alanine and cysteine, to avoid such errors it has two additional distinct editing activities against alanine. One activity is designated as 'pretransfer' editing and involves the tRNA(Pro)-independent hydrolysis of activated Ala-AMP. The other activity is designated 'posttransfer' editing and involves deacylation of mischarged Ala-tRNA(Pro). The misacylated Cys-tRNA(Pro) is not edited by ProRS. This chain is Proline--tRNA ligase, found in Listeria monocytogenes serotype 4a (strain HCC23).